The chain runs to 245 residues: Carboxymethylenebutenolidase homolog (245 aa).

A2 carries the post-translational modification N-acetylalanine. Active-site residues include C132, D179, and H212. S223 bears the Phosphoserine mark.

Belongs to the dienelactone hydrolase family.

Its subcellular location is the cytoplasm. It localises to the cytosol. In terms of biological role, cysteine hydrolase. This Mus musculus (Mouse) protein is Carboxymethylenebutenolidase homolog (Cmbl).